Consider the following 218-residue polypeptide: Capsid protein (218 aa).

Position 1 is an N-acetylmethionine; by host (M1). The segment covering 1–10 (MDKSESTSAG) has biased composition (low complexity). Residues 1-30 (MDKSESTSAGRNRRRRPRRGSRSASSSSDA) are disordered. A compositionally biased stretch (basic residues) spans 11-21 (RNRRRRPRRGS).

This sequence belongs to the cucumovirus capsid protein family.

The protein resides in the virion. Its function is as follows. Capsid protein. Probably binds RNA and plays a role in packaging. In Cucumis sativus (Cucumber), this protein is Capsid protein.